The primary structure comprises 156 residues: Large ribosomal subunit protein uL22 (156 aa).

Belongs to the universal ribosomal protein uL22 family. As to quaternary structure, part of the 50S ribosomal subunit.

In terms of biological role, this protein binds specifically to 23S rRNA. It makes multiple contacts with different domains of the 23S rRNA in the assembled 50S subunit and ribosome. The globular domain of the protein is located near the polypeptide exit tunnel on the outside of the subunit, while an extended beta-hairpin is found that lines the wall of the exit tunnel in the center of the 70S ribosome. The sequence is that of Large ribosomal subunit protein uL22 from Hyperthermus butylicus (strain DSM 5456 / JCM 9403 / PLM1-5).